We begin with the raw amino-acid sequence, 187 residues long: Cytokinin riboside 5'-monophosphate phosphoribohydrolase (187 aa).

Residues Glu-80, 98 to 99 (RK), 115 to 121 (GVGTLDE), and Thr-127 contribute to the substrate site.

The protein belongs to the LOG family.

The catalysed reaction is N(6)-(dimethylallyl)adenosine 5'-phosphate + H2O = N(6)-dimethylallyladenine + D-ribose 5-phosphate. The enzyme catalyses 9-ribosyl-trans-zeatin 5'-phosphate + H2O = trans-zeatin + D-ribose 5-phosphate. Catalyzes the hydrolytic removal of ribose 5'-monophosphate from nitrogen N6-modified adenosines, the final step of bioactive cytokinin synthesis. The sequence is that of Cytokinin riboside 5'-monophosphate phosphoribohydrolase from Mycobacterium marinum (strain ATCC BAA-535 / M).